The following is a 953-amino-acid chain: Nonsense-mediated mRNA decay factor SMG8 (953 aa).

Disordered regions lie at residues alanine 571–proline 604 and proline 629–asparagine 653. Positions alanine 574–proline 586 are enriched in acidic residues. Polar residues predominate over residues isoleucine 595–proline 604. The segment covering serine 634 to asparagine 653 has biased composition (low complexity).

The protein belongs to the SMG8 family.

Its function is as follows. Involved in nonsense-mediated decay (NMD) of mRNAs containing premature stop codons. Probable component of kinase complex containing nonC and recruited to stalled ribosomes. This chain is Nonsense-mediated mRNA decay factor SMG8, found in Drosophila persimilis (Fruit fly).